The chain runs to 671 residues: DNA ligase (671 aa).

Residues 32–36 (DAEYD), 81–82 (SL), and Glu-113 contribute to the NAD(+) site. The N6-AMP-lysine intermediate role is filled by Lys-115. The NAD(+) site is built by Arg-136, Glu-173, Lys-290, and Lys-314. Residues Cys-408, Cys-411, Cys-426, and Cys-432 each coordinate Zn(2+). Positions 593–671 (EIDSPFAGKT…EAEMIRLLGA (79 aa)) constitute a BRCT domain.

Belongs to the NAD-dependent DNA ligase family. LigA subfamily. It depends on Mg(2+) as a cofactor. Mn(2+) is required as a cofactor.

The enzyme catalyses NAD(+) + (deoxyribonucleotide)n-3'-hydroxyl + 5'-phospho-(deoxyribonucleotide)m = (deoxyribonucleotide)n+m + AMP + beta-nicotinamide D-nucleotide.. In terms of biological role, DNA ligase that catalyzes the formation of phosphodiester linkages between 5'-phosphoryl and 3'-hydroxyl groups in double-stranded DNA using NAD as a coenzyme and as the energy source for the reaction. It is essential for DNA replication and repair of damaged DNA. The sequence is that of DNA ligase from Salmonella paratyphi C (strain RKS4594).